Consider the following 414-residue polypeptide: Serine hydroxymethyltransferase (414 aa).

Residues leucine 117 and 121–123 (GHL) contribute to the (6S)-5,6,7,8-tetrahydrofolate site. Lysine 226 carries the N6-(pyridoxal phosphate)lysine modification.

Belongs to the SHMT family. As to quaternary structure, homodimer. The cofactor is pyridoxal 5'-phosphate.

Its subcellular location is the cytoplasm. It carries out the reaction (6R)-5,10-methylene-5,6,7,8-tetrahydrofolate + glycine + H2O = (6S)-5,6,7,8-tetrahydrofolate + L-serine. Its pathway is one-carbon metabolism; tetrahydrofolate interconversion. The protein operates within amino-acid biosynthesis; glycine biosynthesis; glycine from L-serine: step 1/1. Its function is as follows. Catalyzes the reversible interconversion of serine and glycine with tetrahydrofolate (THF) serving as the one-carbon carrier. This reaction serves as the major source of one-carbon groups required for the biosynthesis of purines, thymidylate, methionine, and other important biomolecules. Also exhibits THF-independent aldolase activity toward beta-hydroxyamino acids, producing glycine and aldehydes, via a retro-aldol mechanism. This chain is Serine hydroxymethyltransferase, found in Dictyoglomus thermophilum (strain ATCC 35947 / DSM 3960 / H-6-12).